A 425-amino-acid chain; its full sequence is Histidine--tRNA ligase (425 aa).

The protein belongs to the class-II aminoacyl-tRNA synthetase family. Homodimer.

Its subcellular location is the cytoplasm. The catalysed reaction is tRNA(His) + L-histidine + ATP = L-histidyl-tRNA(His) + AMP + diphosphate + H(+). The protein is Histidine--tRNA ligase of Listeria monocytogenes serotype 4b (strain F2365).